Consider the following 124-residue polypeptide: Large ribosomal subunit protein eL31 (124 aa).

The protein belongs to the eukaryotic ribosomal protein eL31 family.

This is Large ribosomal subunit protein eL31 (RpL31) from Aedes aegypti (Yellowfever mosquito).